A 148-amino-acid polypeptide reads, in one-letter code: Cell division protein SepF (148 aa).

It belongs to the SepF family. Homodimer. Interacts with FtsZ.

It is found in the cytoplasm. Functionally, cell division protein that is part of the divisome complex and is recruited early to the Z-ring. Probably stimulates Z-ring formation, perhaps through the cross-linking of FtsZ protofilaments. Its function overlaps with FtsA. In Alkaliphilus metalliredigens (strain QYMF), this protein is Cell division protein SepF.